A 317-amino-acid polypeptide reads, in one-letter code: 4-hydroxy-3-methylbut-2-enyl diphosphate reductase (317 aa).

C12 contributes to the [4Fe-4S] cluster binding site. Residues H41 and H74 each coordinate (2E)-4-hydroxy-3-methylbut-2-enyl diphosphate. Dimethylallyl diphosphate contacts are provided by H41 and H74. Isopentenyl diphosphate contacts are provided by H41 and H74. Residue C97 participates in [4Fe-4S] cluster binding. Residue H125 participates in (2E)-4-hydroxy-3-methylbut-2-enyl diphosphate binding. H125 contacts dimethylallyl diphosphate. H125 provides a ligand contact to isopentenyl diphosphate. E127 serves as the catalytic Proton donor. T168 is a (2E)-4-hydroxy-3-methylbut-2-enyl diphosphate binding site. Residue C198 coordinates [4Fe-4S] cluster. (2E)-4-hydroxy-3-methylbut-2-enyl diphosphate-binding residues include S226, S227, N228, and S270. Positions 226, 227, 228, and 270 each coordinate dimethylallyl diphosphate. Positions 226, 227, 228, and 270 each coordinate isopentenyl diphosphate.

It belongs to the IspH family. As to quaternary structure, homodimer. [4Fe-4S] cluster serves as cofactor.

The catalysed reaction is isopentenyl diphosphate + 2 oxidized [2Fe-2S]-[ferredoxin] + H2O = (2E)-4-hydroxy-3-methylbut-2-enyl diphosphate + 2 reduced [2Fe-2S]-[ferredoxin] + 2 H(+). It catalyses the reaction dimethylallyl diphosphate + 2 oxidized [2Fe-2S]-[ferredoxin] + H2O = (2E)-4-hydroxy-3-methylbut-2-enyl diphosphate + 2 reduced [2Fe-2S]-[ferredoxin] + 2 H(+). It participates in isoprenoid biosynthesis; dimethylallyl diphosphate biosynthesis; dimethylallyl diphosphate from (2E)-4-hydroxy-3-methylbutenyl diphosphate: step 1/1. Its pathway is isoprenoid biosynthesis; isopentenyl diphosphate biosynthesis via DXP pathway; isopentenyl diphosphate from 1-deoxy-D-xylulose 5-phosphate: step 6/6. Catalyzes the conversion of 1-hydroxy-2-methyl-2-(E)-butenyl 4-diphosphate (HMBPP) into a mixture of isopentenyl diphosphate (IPP) and dimethylallyl diphosphate (DMAPP). Acts in the terminal step of the DOXP/MEP pathway for isoprenoid precursor biosynthesis. In Yersinia pestis bv. Antiqua (strain Antiqua), this protein is 4-hydroxy-3-methylbut-2-enyl diphosphate reductase.